Here is a 92-residue protein sequence, read N- to C-terminus: Costars family protein ST45-2 (92 aa).

N-acetylmethionine is present on Met-1.

Belongs to the costars family.

In Eutrema halophilum (Salt cress), this protein is Costars family protein ST45-2.